A 123-amino-acid polypeptide reads, in one-letter code: Small ribosomal subunit protein uS13c (123 aa).

The disordered stretch occupies residues 99 to 123 (GQRTRSNARTRRGAKKTVAGKKLAK). Residues 100–123 (QRTRSNARTRRGAKKTVAGKKLAK) are compositionally biased toward basic residues.

It belongs to the universal ribosomal protein uS13 family. As to quaternary structure, part of the 30S ribosomal subunit.

It localises to the plastid. The protein resides in the chloroplast. In terms of biological role, located at the top of the head of the 30S subunit, it contacts several helices of the 16S rRNA. This is Small ribosomal subunit protein uS13c from Cyanidioschyzon merolae (strain NIES-3377 / 10D) (Unicellular red alga).